The chain runs to 151 residues: uncharacterized protein (151 aa).

BON domains lie at 2–68 (DDAA…AVDK) and 78–146 (IDSA…RLKH).

This is an uncharacterized protein from Anaplasma centrale.